The chain runs to 429 residues: Carbamoyl phosphate synthase arginine-specific small chain (429 aa).

Residues 1–20 constitute a mitochondrion transit peptide; it reads MIRVIQPPLIASKQLFRRYL. The region spanning 218–406 is the Glutamine amidotransferase type-1 domain; the sequence is HIAVLDCGAK…FENIEQYRAT (189 aa). Cysteine 295 acts as the Nucleophile in catalysis. Residues histidine 379 and glutamate 381 contribute to the active site.

Belongs to the CarA family. As to quaternary structure, heterodimer composed of 2 chains; the small (or glutamine) chain promotes the hydrolysis of glutamine to ammonia, which is used by the large (or ammonia) chain to synthesize carbamoyl phosphate.

It localises to the mitochondrion matrix. It carries out the reaction hydrogencarbonate + L-glutamine + 2 ATP + H2O = carbamoyl phosphate + L-glutamate + 2 ADP + phosphate + 2 H(+). The enzyme catalyses L-glutamine + H2O = L-glutamate + NH4(+). The protein operates within amino-acid biosynthesis; L-arginine biosynthesis; carbamoyl phosphate from bicarbonate: step 1/1. Small subunit of the arginine-specific carbamoyl phosphate synthase (CPSase). CPSase catalyzes the formation of carbamoyl phosphate from the ammonia moiety of glutamine, carbonate, and phosphate donated by ATP, the first step of the arginine biosynthetic pathway. The small subunit (glutamine amidotransferase) binds and cleaves glutamine to supply the large subunit with the substrate ammonia. This Debaryomyces hansenii (strain ATCC 36239 / CBS 767 / BCRC 21394 / JCM 1990 / NBRC 0083 / IGC 2968) (Yeast) protein is Carbamoyl phosphate synthase arginine-specific small chain (CPA1).